Reading from the N-terminus, the 216-residue chain is Adenylate kinase (216 aa).

10-15 (GAGKGT) provides a ligand contact to ATP. The segment at 30-59 (STGDMFRAAMKAETEMGLQAKSFIDKGALV) is NMP. AMP contacts are provided by residues Thr-31, Arg-36, 57–59 (ALV), 85–88 (GFPR), and Gln-92. Positions 126–163 (GRRICKECGATYHLEFNAPAKADVCDKCGGELYQRSDD) are LID. Residue Arg-127 coordinates ATP. Residues Cys-130 and Cys-133 each coordinate Zn(2+). Position 136 to 137 (136 to 137 (TY)) interacts with ATP. Positions 150 and 153 each coordinate Zn(2+). 2 residues coordinate AMP: Arg-160 and Arg-171. Gln-199 lines the ATP pocket.

Belongs to the adenylate kinase family. As to quaternary structure, monomer.

The protein resides in the cytoplasm. It catalyses the reaction AMP + ATP = 2 ADP. The protein operates within purine metabolism; AMP biosynthesis via salvage pathway; AMP from ADP: step 1/1. In terms of biological role, catalyzes the reversible transfer of the terminal phosphate group between ATP and AMP. Plays an important role in cellular energy homeostasis and in adenine nucleotide metabolism. This chain is Adenylate kinase, found in Bacillus anthracis (strain A0248).